A 325-amino-acid chain; its full sequence is Tetraacyldisaccharide 4'-kinase (325 aa).

55–62 (TAGGNGKT) lines the ATP pocket.

Belongs to the LpxK family.

It catalyses the reaction a lipid A disaccharide + ATP = a lipid IVA + ADP + H(+). Its pathway is glycolipid biosynthesis; lipid IV(A) biosynthesis; lipid IV(A) from (3R)-3-hydroxytetradecanoyl-[acyl-carrier-protein] and UDP-N-acetyl-alpha-D-glucosamine: step 6/6. In terms of biological role, transfers the gamma-phosphate of ATP to the 4'-position of a tetraacyldisaccharide 1-phosphate intermediate (termed DS-1-P) to form tetraacyldisaccharide 1,4'-bis-phosphate (lipid IVA). The protein is Tetraacyldisaccharide 4'-kinase of Salmonella arizonae (strain ATCC BAA-731 / CDC346-86 / RSK2980).